The following is a 526-amino-acid chain: MLGRTLREVSVELKQGQITPTELCQRCLSLIKKTKFLNAYITVSEEVALKQAEESEKRYKKGHSLGDLDGIPIAVKDNFSTSGIETTCASNMLKGYVPPYNATVVQKLLDQGALLMGKTNLDEFAMGSGSTDGIFGPVKNPWSYSKQYREKRKQNSHSENEDSNWLITGGSSGGSAAAVSAFTCFAALGSDTGGSTRNPAAHCGVVGLKPSYGLVSRHGLIPLVNSMDVPGILTRCVDDAATVLGVLAGHDPKDSTTIQDPVKPFTLPSLTDVSKLCIGIPKEYLTPELSSEVQSLWSKAANLFESEGAKVTEVSLPHTSYSIVCYHVLCTSEVASNMARFDGLEYGHRCDSDVSTEAMYAATRREGFNDVVRGRILSGNFFLLKENYENYFVKAQKVRRLIANDFVNVFNSGVDVLLTPTTLSEAVPYTEFIKEDNRTRSAQDDIFTQAVNMAGLPAVSVPVALSSQGLPIGLQFIGRAFCDQQLLIVAKWFEKQVQFPVIQLQELMDDCSSVFENEKLASVSLK.

Residue lysine 76 is the Charge relay system of the active site. Residues 147-166 (QYREKRKQNSHSENEDSNWL) form a disordered region. Serine 171 functions as the Charge relay system in the catalytic mechanism. Serine 195 (acyl-ester intermediate) is an active-site residue.

It belongs to the amidase family. GatA subfamily. As to quaternary structure, subunit of the heterotrimeric GatCAB amidotransferase (AdT) complex, composed of A (QRSL1), B (GATB) and C (GATC) subunits.

The protein resides in the mitochondrion. It catalyses the reaction L-glutamyl-tRNA(Gln) + L-glutamine + ATP + H2O = L-glutaminyl-tRNA(Gln) + L-glutamate + ADP + phosphate + H(+). Functionally, allows the formation of correctly charged Gln-tRNA(Gln) through the transamidation of misacylated Glu-tRNA(Gln) in the mitochondria. The reaction takes place in the presence of glutamine and ATP through an activated gamma-phospho-Glu-tRNA(Gln). In Bos taurus (Bovine), this protein is Glutamyl-tRNA(Gln) amidotransferase subunit A, mitochondrial.